The following is a 393-amino-acid chain: Pyrimidine monooxygenase RutA (393 aa).

FMN-binding positions include 79–80 (IK), Asn145, Glu154, 170–171 (RY), and Ser220.

This sequence belongs to the NtaA/SnaA/DszA monooxygenase family. RutA subfamily.

It carries out the reaction uracil + FMNH2 + NADH + O2 = (Z)-3-ureidoacrylate + FMN + NAD(+) + H2O + H(+). The catalysed reaction is thymine + FMNH2 + NADH + O2 = (Z)-2-methylureidoacrylate + FMN + NAD(+) + H2O + H(+). Functionally, catalyzes the pyrimidine ring opening between N-3 and C-4 by an unusual flavin hydroperoxide-catalyzed mechanism, adding oxygen atoms in the process to yield ureidoacrylate peracid, that immediately reacts with FMN forming ureidoacrylate and FMN-N(5)-oxide. The FMN-N(5)-oxide reacts spontaneously with NADH to produce FMN. Requires the flavin reductase RutF to regenerate FMN in vivo. In Escherichia coli O139:H28 (strain E24377A / ETEC), this protein is Pyrimidine monooxygenase RutA.